We begin with the raw amino-acid sequence, 400 residues long: Imidazolonepropionase (400 aa).

Residues His-68 and His-70 each coordinate Fe(3+). Zn(2+)-binding residues include His-68 and His-70. 3 residues coordinate 4-imidazolone-5-propanoate: Arg-77, Tyr-140, and His-173. Residue Tyr-140 coordinates N-formimidoyl-L-glutamate. His-238 contacts Fe(3+). His-238 contributes to the Zn(2+) binding site. A 4-imidazolone-5-propanoate-binding site is contributed by Gln-241. Position 313 (Asp-313) interacts with Fe(3+). Residue Asp-313 coordinates Zn(2+). Asn-315 and Gly-317 together coordinate N-formimidoyl-L-glutamate. Position 318 (Thr-318) interacts with 4-imidazolone-5-propanoate.

The protein belongs to the metallo-dependent hydrolases superfamily. HutI family. Zn(2+) is required as a cofactor. Fe(3+) serves as cofactor.

Its subcellular location is the cytoplasm. It carries out the reaction 4-imidazolone-5-propanoate + H2O = N-formimidoyl-L-glutamate. The protein operates within amino-acid degradation; L-histidine degradation into L-glutamate; N-formimidoyl-L-glutamate from L-histidine: step 3/3. In terms of biological role, catalyzes the hydrolytic cleavage of the carbon-nitrogen bond in imidazolone-5-propanoate to yield N-formimidoyl-L-glutamate. It is the third step in the universal histidine degradation pathway. The chain is Imidazolonepropionase from Paracoccus denitrificans (strain Pd 1222).